A 221-amino-acid polypeptide reads, in one-letter code: MEIFLDTANIEEIRKGVAWGIVDGVTTNPTLVSKENAVFEERIKEICETVEGPVSAEVVSTDYEGMVKEAREIANLSEFVVVKIPLIPDGIKAIKTLSKEGIKTNATLVFSPLQALLAAKAGATYVSPFIGRMDDIGNTGMDIVEEIEVIFSNYGYETKIIVASVRHPQHVLEAGLIGADVVTMPFEVLEKMFKHPMTDIGLERFLNDWKKYQDYLKSKNN.

The Schiff-base intermediate with substrate role is filled by Lys-83.

This sequence belongs to the transaldolase family. Type 3B subfamily.

The protein resides in the cytoplasm. It carries out the reaction D-sedoheptulose 7-phosphate + D-glyceraldehyde 3-phosphate = D-erythrose 4-phosphate + beta-D-fructose 6-phosphate. It participates in carbohydrate degradation; pentose phosphate pathway; D-glyceraldehyde 3-phosphate and beta-D-fructose 6-phosphate from D-ribose 5-phosphate and D-xylulose 5-phosphate (non-oxidative stage): step 2/3. In terms of biological role, transaldolase is important for the balance of metabolites in the pentose-phosphate pathway. The protein is Probable transaldolase of Petrotoga mobilis (strain DSM 10674 / SJ95).